Consider the following 358-residue polypeptide: Serine/threonine-protein phosphatase 2A activator 2 (358 aa).

Interacts with the phosphatase PP2A catalytic subunits PPH21 and PPH22. Forms a ternary complex with PPH21-TAP42.

It localises to the cytoplasm. The enzyme catalyses [protein]-peptidylproline (omega=180) = [protein]-peptidylproline (omega=0). Its function is as follows. PPIases accelerate the folding of proteins. It catalyzes the cis-trans isomerization of proline imidic peptide bonds in oligopeptides. Acts as a regulatory subunit for TAP42-associated PP2A-like phosphatases modulating their activity or substrate specificity, probably by inducing a conformational change in the catalytic subunit, a direct target of the PPIase. Can reactivate inactive phosphatase PP2A-phosphatase methylesterase complexes (PP2Ai) in presence of ATP and Mg(2+) by dissociating the inactive form from the complex. Acts also inhibitory at high concentrations. Involved in the regulation of cell cycle progression, mitotic spindle formation and bud morphogenesis. The sequence is that of Serine/threonine-protein phosphatase 2A activator 2 (RRD2) from Saccharomyces cerevisiae (strain ATCC 204508 / S288c) (Baker's yeast).